Here is a 209-residue protein sequence, read N- to C-terminus: Holliday junction branch migration complex subunit RuvA (209 aa).

The tract at residues 1–64 (MIGKLKGLVD…EDSIKLYGFA (64 aa)) is domain I. Residues 65-143 (SETEREWFRL…ALGASLHTLA (79 aa)) are domain II. Positions 144–154 (GAGSEGAGVEA) are flexible linker. The interval 155-209 (PASGAVSDAISVLVNLGFGRSQAAVAVAASSKALGSGAGAGDLAKRALQELAQSG) is domain III.

The protein belongs to the RuvA family. As to quaternary structure, homotetramer. Forms an RuvA(8)-RuvB(12)-Holliday junction (HJ) complex. HJ DNA is sandwiched between 2 RuvA tetramers; dsDNA enters through RuvA and exits via RuvB. An RuvB hexamer assembles on each DNA strand where it exits the tetramer. Each RuvB hexamer is contacted by two RuvA subunits (via domain III) on 2 adjacent RuvB subunits; this complex drives branch migration. In the full resolvosome a probable DNA-RuvA(4)-RuvB(12)-RuvC(2) complex forms which resolves the HJ.

The protein resides in the cytoplasm. The RuvA-RuvB-RuvC complex processes Holliday junction (HJ) DNA during genetic recombination and DNA repair, while the RuvA-RuvB complex plays an important role in the rescue of blocked DNA replication forks via replication fork reversal (RFR). RuvA specifically binds to HJ cruciform DNA, conferring on it an open structure. The RuvB hexamer acts as an ATP-dependent pump, pulling dsDNA into and through the RuvAB complex. HJ branch migration allows RuvC to scan DNA until it finds its consensus sequence, where it cleaves and resolves the cruciform DNA. This is Holliday junction branch migration complex subunit RuvA from Methylocella silvestris (strain DSM 15510 / CIP 108128 / LMG 27833 / NCIMB 13906 / BL2).